Here is a 217-residue protein sequence, read N- to C-terminus: Ras-related protein RABA2d (217 aa).

19–26 (GDSGVGKT) provides a ligand contact to GTP. The short motif at 41–49 (SKSTIGVEF) is the Effector region element. GTP-binding positions include 67–71 (DTAGQ), 125–128 (NKAD), and 155–156 (SA). Residues 196-217 (GQGTTINVEDTSGAGKRGCCST) are disordered. S-geranylgeranyl cysteine attachment occurs at residues cysteine 214 and cysteine 215.

The protein belongs to the small GTPase superfamily. Rab family. As to expression, expressed in root tips.

The protein resides in the endosome membrane. The protein localises to the golgi apparatus. Its subcellular location is the trans-Golgi network membrane. Functionally, intracellular vesicle trafficking and protein transport. In Arabidopsis thaliana (Mouse-ear cress), this protein is Ras-related protein RABA2d (RABA2D).